The primary structure comprises 683 residues: 1,4-alpha-glucan-branching enzyme (683 aa).

Positions 92 and 127 each coordinate (1,4-alpha-D-glucosyl)n. Residue aspartate 342 is the Nucleophile of the active site. Residue glutamate 397 is the Proton donor of the active site.

Belongs to the glycosyl hydrolase 13 family. GlgB subfamily.

It is found in the cytoplasm. The catalysed reaction is Transfers a segment of a (1-&gt;4)-alpha-D-glucan chain to a primary hydroxy group in a similar glucan chain.. It functions in the pathway glycan biosynthesis; glycogen biosynthesis. In terms of biological role, glycogen-branching enzyme participates in the glycogen biosynthetic process along with glycogenin and glycogen synthase. Generates alpha-1,6-glucosidic branches from alpha-1,4-linked glucose chains, to increase solubility of the glycogen polymer. This Rhizophagus irregularis (strain DAOM 181602 / DAOM 197198 / MUCL 43194) (Arbuscular mycorrhizal fungus) protein is 1,4-alpha-glucan-branching enzyme (GLC3).